Consider the following 467-residue polypeptide: Putative pentatricopeptide repeat-containing protein At1g10330 (467 aa).

PPR repeat units follow at residues 50 to 84, 85 to 119, 120 to 150, 151 to 181, 182 to 216, 220 to 256, 257 to 287, 288 to 322, 323 to 358, and 359 to 389; these read TKCV…HVQP, NNLT…GFLW, DPFV…ILNP, CVVA…MPVT, DVVS…ERAV, NEAT…EIIL, TTTL…IRDK, KVCA…YVHP, NGIT…KIIP, and TSEH…LPFE. The type E motif; degenerate stretch occupies residues 394–467; the sequence is VLGALLGACK…RKIPAYSVLT (74 aa).

The protein belongs to the PPR family. PCMP-E subfamily.

In Arabidopsis thaliana (Mouse-ear cress), this protein is Putative pentatricopeptide repeat-containing protein At1g10330 (PCMP-E71).